Reading from the N-terminus, the 407-residue chain is Growth/differentiation factor 11 (407 aa).

The N-terminal stretch at 1-24 (MVLAAPLLLGFLLLALELRPRGEA) is a signal peptide. The propeptide occupies 25–298 (AEGPAAAAAA…VLENTKRSRR (274 aa)). The N-linked (GlcNAc...) asparagine glycan is linked to asparagine 94. Intrachain disulfides connect cysteine 304–cysteine 314, cysteine 313–cysteine 372, cysteine 341–cysteine 404, and cysteine 345–cysteine 406.

The protein belongs to the TGF-beta family. In terms of assembly, homodimer; disulfide-linked. Interacts directly with ACVR2B. Interacts directly with ACVR2A. Interacts with ACVR1B, TGFBR1 and ACVR1C in an ACVR2B-dependent manner. Interacts with FST isoform 2/FS-288. In terms of processing, synthesized as large precursor molecule that undergoes proteolytic cleavage by furin-like proteases. This produces an inactive form consisting of the mature C-terminal portion non-covalently bound to its cleaved N-terminal propeptide. Activation of the mature form requires additional cleavage of the propeptide by a tolloid-like metalloproteinase. In the embryo, strong expression is seen in the palatal epithelia, including the medial edge epithelial and midline epithelial seam of the palatal shelves. Less pronounced expression is also seen throughout the palatal shelf and tongue mesenchyme.

The protein localises to the secreted. Secreted signal that acts globally to regulate anterior/posterior axial patterning during development. May play critical roles in patterning both mesodermal and neural tissues. It is required for proper vertebral patterning and orofacial development. Signals through activin receptors type-2, ACVR2A and ACVR2B, and activin receptors type-1, ACVR1B, ACVR1C and TGFBR1 leading to the phosphorylation of SMAD2 and SMAD3. The protein is Growth/differentiation factor 11 (GDF11) of Homo sapiens (Human).